Consider the following 280-residue polypeptide: Equatorin (280 aa).

A signal peptide spans 1-19 (MDFILLIFLSGVFLPNIFS). The Vesicular portion of the chain corresponds to 20-183 (LQPTVEQDPG…LSELEEIKLK (164 aa)). A disordered region spans residues 112–131 (ATASGEEDKRSEPSRKSSTP). A compositionally biased stretch (basic and acidic residues) spans 117-126 (EEDKRSEPSR). A glycan (N-linked (GlcNAc...) asparagine) is linked at N145. A helical transmembrane segment spans residues 184–204 (LMLGISLMTLILLIPLLIFCF). Residues 205-280 (ATLYKLRHLR…AEVTEERISE (76 aa)) are Cytoplasmic-facing. At S279 the chain carries Phosphoserine.

In terms of assembly, interacts with SNAP25. Post-translationally, highly N- and O-glycosylated; contains sialic acid. As to expression, highly expressed in testis and epididymis. Low expression in other tissues.

It localises to the cytoplasmic vesicle. The protein resides in the secretory vesicle. It is found in the acrosome membrane. The protein localises to the acrosome inner membrane. Its subcellular location is the acrosome outer membrane. In terms of biological role, acrosomal membrane-anchored protein involved in the process of fertilization and in acrosome biogenesis. This is Equatorin (Eqtn) from Rattus norvegicus (Rat).